The chain runs to 390 residues: Flagellar P-ring protein (390 aa).

The N-terminal stretch at 1–25 (MLLKKIFLTGIIVLDLVFFVSYGFA) is a signal peptide.

This sequence belongs to the FlgI family. The basal body constitutes a major portion of the flagellar organelle and consists of four rings (L,P,S, and M) mounted on a central rod.

Its subcellular location is the periplasm. The protein localises to the bacterial flagellum basal body. Functionally, assembles around the rod to form the L-ring and probably protects the motor/basal body from shearing forces during rotation. The sequence is that of Flagellar P-ring protein from Syntrophus aciditrophicus (strain SB).